The following is a 371-amino-acid chain: DNA replication and repair protein RecF (371 aa).

G30 to T37 provides a ligand contact to ATP.

The protein belongs to the RecF family.

The protein localises to the cytoplasm. Functionally, the RecF protein is involved in DNA metabolism; it is required for DNA replication and normal SOS inducibility. RecF binds preferentially to single-stranded, linear DNA. It also seems to bind ATP. In Lysinibacillus sphaericus (strain C3-41), this protein is DNA replication and repair protein RecF.